Reading from the N-terminus, the 139-residue chain is Class I hydrophobin 1 (139 aa).

The first 21 residues, M1–P21, serve as a signal peptide directing secretion. 4 disulfide bridges follow: C57/C118, C64/C112, C65/C98, and C119/C132.

It belongs to the fungal hydrophobin family. As to quaternary structure, self-assembles to form functional amyloid fibrils called rodlets. Self-assembly into fibrillar rodlets occurs spontaneously at hydrophobic:hydrophilic interfaces and the rodlets further associate laterally to form amphipathic monolayers.

The protein resides in the secreted. Its subcellular location is the cell wall. Aerial growth, conidiation, and dispersal of filamentous fungi in the environment rely upon a capability of their secreting small amphipathic proteins called hydrophobins (HPBs) with low sequence identity. Class I can self-assemble into an outermost layer of rodlet bundles on aerial cell surfaces, conferring cellular hydrophobicity that supports fungal growth, development and dispersal; whereas Class II form highly ordered films at water-air interfaces through intermolecular interactions but contribute nothing to the rodlet structure. Hah1 is a class I hydrophobin that is involved in aerial growth of mycelia, but does not play a role in pathogenesis. This chain is Class I hydrophobin 1, found in Heterobasidion annosum (Root rot fungus).